The sequence spans 572 residues: uncharacterized protein (572 aa).

A disordered region spans residues 13-45 (ALIAKPKGKTVSGDGADPKKRGRPKKNATEPAV). Residues 177–204 (VLTKEMEEKLEALDRDMRTAEETKVSIA) are a coiled coil.

This is an uncharacterized protein from Dryophytes versicolor (chameleon treefrog).